Consider the following 335-residue polypeptide: Probable calcium-binding protein CML49 (335 aa).

Positions 1–10 are enriched in low complexity; the sequence is MSGYPPSSQG. Positions 1–154 are disordered; sequence MSGYPPSSQG…PQASYGSPFA (154 aa). Residues 30–45 show a composition bias toward pro residues; that stretch reads NPPPYGSSGSNPPPPY. Residues 46–63 are compositionally biased toward low complexity; sequence GSSASSPYAVPYGAQPAP. The segment covering 110 to 141 has biased composition (gly residues); that stretch reads DYGGYGGAPQQSGHGGGYGGAPQQSGHGGGYG. EF-hand domains are found at residues 164 to 199 and 230 to 265; these read GTDPNIVACFQAADRDNSGFIDDKELQGALSSYNQS and FSLQNWRSIFERFDKDRSGRIDTNELRDALMSLGFS. Ca(2+) is bound by residues aspartate 177, aspartate 179, serine 181, glutamate 188, aspartate 243, aspartate 245, serine 247, arginine 249, and glutamate 254.

Its function is as follows. Potential calcium sensor. The polypeptide is Probable calcium-binding protein CML49 (CML49) (Arabidopsis thaliana (Mouse-ear cress)).